A 299-amino-acid chain; its full sequence is MSFKSGFVAILGRPNVGKSTFLNHVMGQKIAIMSDKAQTTRNKIMGIYTTDKEQIVFIDTPGIHKPKTALGDFMVESAYSTLREVDTVLFMVPADEKRGKGDDMIMERLKNAKIPVILVINKIDKVHPDQLLEQIDDFRSQMDFKEVVPISALQGNNVPTLISLLTDNLEEGFQYFPEDQITDHPERFLVSEMIREKVLHLTQQEIPHSVAVVIESMKRDQVTDKVHIRATIMVERDSQKGIIIGKQGSMLKKIGQMARRDIELMLGDKVYLETWVKVKKNWRDKKLDLADFGYNQKEY.

An Era-type G domain is found at 4 to 171; that stretch reads KSGFVAILGR…ISLLTDNLEE (168 aa). The segment at 12–19 is G1; that stretch reads GRPNVGKS. 12–19 serves as a coordination point for GTP; that stretch reads GRPNVGKS. The segment at 38 to 42 is G2; that stretch reads QTTRN. The segment at 59–62 is G3; sequence DTPG. Residues 59–63 and 121–124 each bind GTP; these read DTPGI and NKID. A G4 region spans residues 121-124; that stretch reads NKID. Residues 150–152 are G5; sequence ISA. A KH type-2 domain is found at 202–280; the sequence is TQQEIPHSVA…YLETWVKVKK (79 aa).

This sequence belongs to the TRAFAC class TrmE-Era-EngA-EngB-Septin-like GTPase superfamily. Era GTPase family. Monomer.

Its subcellular location is the cytoplasm. It is found in the cell membrane. Functionally, an essential GTPase that binds both GDP and GTP, with rapid nucleotide exchange. Plays a role in 16S rRNA processing and 30S ribosomal subunit biogenesis and possibly also in cell cycle regulation and energy metabolism. This is GTPase Era from Streptococcus uberis (strain ATCC BAA-854 / 0140J).